A 350-amino-acid polypeptide reads, in one-letter code: Sterol-4-alpha-carboxylate 3-dehydrogenase ERG26, decarboxylating (350 aa).

NADP(+) contacts are provided by residues 12 to 18 (GGSGFLG), 63 to 64 (DL), and 85 to 87 (SAS). Residues S125 and Y152 each contribute to the substrate site. Residues Y152, K156, and 179–182 (PAGI) contribute to the NADP(+) site. K156 serves as the catalytic Proton donor.

It belongs to the 3-beta-HSD family. As to quaternary structure, heterotetramer of ERG25, ERG26, ERG27 and ERG28. ERG28 acts as a scaffold to tether ERG27 and other 4,4-demethylation-related enzymes, forming a demethylation enzyme complex, in the endoplasmic reticulum.

Its subcellular location is the endoplasmic reticulum membrane. The catalysed reaction is 4beta-methylzymosterol-4alpha-carboxylate + NADP(+) = 3-dehydro-4-methylzymosterol + CO2 + NADPH. The protein operates within steroid biosynthesis; zymosterol biosynthesis; zymosterol from lanosterol: step 4/6. Its function is as follows. Sterol-4-alpha-carboxylate 3-dehydrogenase; part of the third module of ergosterol biosynthesis pathway that includes the late steps of the pathway. ERG26 is a catalytic component of the C-4 demethylation complex that catalyzes the oxidative decarboxylation that results in a reduction of the 3-beta-hydroxy group at the C-3 carbon to an oxo group. The third module or late pathway involves the ergosterol synthesis itself through consecutive reactions that mainly occur in the endoplasmic reticulum (ER) membrane. Firstly, the squalene synthase ERG9 catalyzes the condensation of 2 farnesyl pyrophosphate moieties to form squalene, which is the precursor of all steroids. Squalene synthase is crucial for balancing the incorporation of farnesyl diphosphate (FPP) into sterol and nonsterol isoprene synthesis. Secondly, the squalene epoxidase ERG1 catalyzes the stereospecific oxidation of squalene to (S)-2,3-epoxysqualene, which is considered to be a rate-limiting enzyme in steroid biosynthesis. Then, the lanosterol synthase ERG7 catalyzes the cyclization of (S)-2,3 oxidosqualene to lanosterol, a reaction that forms the sterol core. In the next steps, lanosterol is transformed to zymosterol through a complex process involving various demethylation, reduction and desaturation reactions. The lanosterol 14-alpha-demethylase ERG11 (also known as CYP51) catalyzes C14-demethylation of lanosterol to produce 4,4'-dimethyl cholesta-8,14,24-triene-3-beta-ol, which is critical for ergosterol biosynthesis. The C-14 reductase ERG24 reduces the C14=C15 double bond of 4,4-dimethyl-cholesta-8,14,24-trienol to produce 4,4-dimethyl-cholesta-8,24-dienol. 4,4-dimethyl-cholesta-8,24-dienol is substrate of the C-4 demethylation complex ERG25-ERG26-ERG27 in which ERG25 catalyzes the three-step monooxygenation required for the demethylation of 4,4-dimethyl and 4alpha-methylsterols, ERG26 catalyzes the oxidative decarboxylation that results in a reduction of the 3-beta-hydroxy group at the C-3 carbon to an oxo group, and ERG27 is responsible for the reduction of the keto group on the C-3. ERG28 has a role as a scaffold to help anchor ERG25, ERG26 and ERG27 to the endoplasmic reticulum and ERG29 regulates the activity of the iron-containing C4-methylsterol oxidase ERG25. Then, the sterol 24-C-methyltransferase ERG6 catalyzes the methyl transfer from S-adenosyl-methionine to the C-24 of zymosterol to form fecosterol. The C-8 sterol isomerase ERG2 catalyzes the reaction which results in unsaturation at C-7 in the B ring of sterols and thus converts fecosterol to episterol. The sterol-C5-desaturase ERG3 then catalyzes the introduction of a C-5 double bond in the B ring to produce 5-dehydroepisterol. The C-22 sterol desaturase ERG5 further converts 5-dehydroepisterol into ergosta-5,7,22,24(28)-tetraen-3beta-ol by forming the C-22(23) double bond in the sterol side chain. Finally, ergosta-5,7,22,24(28)-tetraen-3beta-ol is substrate of the C-24(28) sterol reductase ERG4 to produce ergosterol. In Candida albicans (strain SC5314 / ATCC MYA-2876) (Yeast), this protein is Sterol-4-alpha-carboxylate 3-dehydrogenase ERG26, decarboxylating.